The sequence spans 525 residues: Neuropilin and tolloid-like protein 2 (525 aa).

An N-terminal signal peptide occupies residues 1 to 22; sequence MALERLCSVLKVLLITVLVVEG. The Extracellular segment spans residues 23-347; it reads IAVAQKTQDG…GVFEQITKTH (325 aa). Disulfide bonds link C45–C72, C100–C122, C177–C207, C234–C256, C297–C309, C304–C322, and C316–C331. 2 CUB domains span residues 45–159 and 177–292; these read CGIW…YSFI and CQFE…FTSF. In terms of domain architecture, LDL-receptor class A spans 296-332; sequence PCTSSTFFCHSNMCINNSLVCNGVQNCAYPWDENHCK. The N-linked (GlcNAc...) asparagine glycan is linked to N311. The helical transmembrane segment at 348 to 368 threads the bilayer; the sequence is GTIIGITSGIVLVLLIISILV. At 369–525 the chain is on the cytoplasmic side; that stretch reads QVKQPRKKVM…SAQASISIDF (157 aa). S409 carries the phosphoserine modification.

Interacts with GRIK2 and GRIK3, but neither with AMPA-nor with NMDA-sensitive glutamate receptors. Post-translationally, N-glycosylated.

The protein resides in the membrane. Accessory subunit of neuronal kainate-sensitive glutamate receptors, GRIK2 and GRIK3. Increases kainate-receptor channel activity, slowing the decay kinetics of the receptors, without affecting their expression at the cell surface, and increasing the open probability of the receptor channels. Modulates the agonist sensitivity of kainate receptors. Slows the decay of kainate receptor-mediated excitatory postsynaptic currents (EPSCs), thus directly influencing synaptic transmission. In Homo sapiens (Human), this protein is Neuropilin and tolloid-like protein 2 (NETO2).